The chain runs to 348 residues: Peptidyl-Lys metalloendopeptidase (348 aa).

Positions 1-18 are cleaved as a signal peptide; sequence MFSSVMVALVSLAVAVSA. A propeptide spanning residues 19 to 181 is cleaved from the precursor; the sequence is NPGLSLKVSG…RATPTLTRPV (163 aa). Disulfide bonds link Cys-186-Cys-256 and Cys-258-Cys-278. Thr-223 carries an O-linked (Man) threonine; partial glycan. His-298 provides a ligand contact to Zn(2+). Residue Glu-299 is part of the active site. His-302 and Asp-311 together coordinate Zn(2+).

It depends on Zn(2+) as a cofactor.

It localises to the secreted. The enzyme catalyses Preferential cleavage in proteins: -Xaa-|-Lys- (in which Xaa may be Pro).. With respect to regulation, inhibited by chelating agents such as EDTA and 1,10-phenanthroline. In Grifola frondosa (Maitake), this protein is Peptidyl-Lys metalloendopeptidase (MEP).